The sequence spans 247 residues: Capsid protein (247 aa).

The interval 1–40 (MWGTSNCACAKFQIRRRYARPYRRRHIRRYRRRRRHFRRR) is DNA-binding. A nuclear localization signals region spans residues 15–44 (RRRYARPYRRRHIRRYRRRRRHFRRRRFTT).

It belongs to the circoviridae capsid protein family. In terms of assembly, homomultimer. Assembles in the nucleus, presumably in an immature form, then migrates to the cytoplasm once assembled as mature virion. Interacts with Rep; this interaction relocates Rep into the nucleus.

It is found in the host nucleus. It localises to the virion. Functionally, self-assembles to form the virion icosahedral capsid with a T=1 symmetry. This very small capsid (17 - 22 nm in diameter) allows the virus to be very stable in the environment and resistant to some disinfectants, including detergents. Essential for the initial attachment to heparan sulfate moieties and chondroitin sulfate B of the host cell surface proteoglycans. After attachment, the virus is endocytosed and traffics to the nucleus. The capsid protein binds and transports the viral genome and Rep across the nuclear envelope. The polypeptide is Capsid protein (Cap) (Beak and feather disease virus (BFDV)).